We begin with the raw amino-acid sequence, 803 residues long: Sensor histidine kinase CheAY (803 aa).

Phosphohistidine is present on His-47. 2 disordered regions span residues 134-185 (LESA…DEPD) and 209-255 (EADK…ENKA). 3 stretches are compositionally biased toward basic and acidic residues: residues 136–166 (SAKE…ENKA), 209–226 (EADK…KPKQ), and 233–254 (ETPK…EENK). The Histidine kinase domain maps to 270-517 (RLDHLMNLIG…TQKLKIPLTL (248 aa)). His-273 carries the post-translational modification Phosphohistidine; by autocatalysis. Residues 519 to 653 (IIQALLVGVQ…VGAMMDMAKS (135 aa)) enclose the CheW-like domain. The Response regulatory domain maps to 678–796 (IVLAIDDSST…YLTTVVKRSI (119 aa)). 4-aspartylphosphate is present on Asp-729.

Autophosphorylated.

It carries out the reaction ATP + protein L-histidine = ADP + protein N-phospho-L-histidine.. In terms of biological role, member of the two-component regulatory system CheAY/CheY that regulates chemotaxis and colonization of the gastric mucosa. Functions as a sensor protein kinase which is autophosphorylated at a histidine residue and transfers its phosphate group to the conserved aspartic acid residue in the regulatory domain of CheY. In turn, phosphorylated CheY (CheY-P) interacts with the flagellar motor protein FliM to cause clockwise flagellar rotation and bacterial reversals, as opposed to straight swimming when CheY is not phosphorylated. The protein is Sensor histidine kinase CheAY (cheAY) of Helicobacter pylori (strain ATCC 700392 / 26695) (Campylobacter pylori).